Consider the following 209-residue polypeptide: Thymidine kinase (209 aa).

Residues Ser-9–Thr-16 and Asp-88–Gln-91 each bind ATP. The active-site Proton acceptor is Glu-89.

It belongs to the thymidine kinase family. Homotetramer.

The protein localises to the cytoplasm. The enzyme catalyses thymidine + ATP = dTMP + ADP + H(+). The chain is Thymidine kinase from Xanthomonas oryzae pv. oryzae (strain MAFF 311018).